A 389-amino-acid polypeptide reads, in one-letter code: UDP-D-apiose/UDP-D-xylose synthase 1 (389 aa).

NAD(+) contacts are provided by Phe-28, Ile-29, Asp-49, Asn-76, Ile-77, and Leu-96. Positions 105, 139, 141, 182, and 185 each coordinate UDP-alpha-D-glucuronate. Residues Tyr-185 and Lys-189 each coordinate NAD(+). Tyr-185 functions as the Proton acceptor in the catalytic mechanism. Asn-214 serves as a coordination point for UDP-alpha-D-glucuronate. Trp-215 and Arg-235 together coordinate NAD(+). UDP-alpha-D-glucuronate is bound by residues Lys-251, Val-253, Arg-260, Tyr-331, Tyr-335, Asp-337, and Arg-341.

This sequence belongs to the NAD(P)-dependent epimerase/dehydratase family. As to quaternary structure, homodimer and heterodimer with AXS2. It depends on NAD(+) as a cofactor. In terms of tissue distribution, widely expressed with stronger expression in leaves and stems, and lower levels in flowers, siliques, pistils, pollen and roots.

It localises to the cytoplasm. It catalyses the reaction UDP-alpha-D-glucuronate + H(+) = UDP-alpha-D-xylose + CO2. It carries out the reaction UDP-alpha-D-glucuronate + H(+) = UDP-alpha-D-apiose + CO2. Inhibited by UDP-D-galacturonate. Its function is as follows. Together with AXS2, catalyzes the conversion of UDP-D-glucuronate into a mixture of UDP-D-apiose (UDP-Api) as the main product and UDP-D-xylose to a lesser extent, via a cycle of oxidation and reduction. D-Apiose (3-C-hydroxymethyl-d-erythrose) is the only plant cell wall monosaccharide with a branched carbon skeleton and is found in rhamnogalacturonan II (RG-II), apiogalacturonan, and several apioglycosides. This is UDP-D-apiose/UDP-D-xylose synthase 1 from Arabidopsis thaliana (Mouse-ear cress).